A 472-amino-acid chain; its full sequence is ATP synthase subunit beta (472 aa).

Residue 155–162 (GGAGVGKT) coordinates ATP.

It belongs to the ATPase alpha/beta chains family. As to quaternary structure, F-type ATPases have 2 components, CF(1) - the catalytic core - and CF(0) - the membrane proton channel. CF(1) has five subunits: alpha(3), beta(3), gamma(1), delta(1), epsilon(1). CF(0) has three main subunits: a(1), b(2) and c(9-12). The alpha and beta chains form an alternating ring which encloses part of the gamma chain. CF(1) is attached to CF(0) by a central stalk formed by the gamma and epsilon chains, while a peripheral stalk is formed by the delta and b chains.

It localises to the cell membrane. The enzyme catalyses ATP + H2O + 4 H(+)(in) = ADP + phosphate + 5 H(+)(out). In terms of biological role, produces ATP from ADP in the presence of a proton gradient across the membrane. The catalytic sites are hosted primarily by the beta subunits. In Fervidobacterium islandicum, this protein is ATP synthase subunit beta.